The following is a 496-amino-acid chain: Glycerol kinase (496 aa).

Residue Thr12 coordinates ADP. ATP-binding residues include Thr12, Thr13, and Ser14. Thr12 is a sn-glycerol 3-phosphate binding site. ADP is bound at residue Arg16. 3 residues coordinate sn-glycerol 3-phosphate: Arg82, Glu83, and Tyr134. Arg82, Glu83, and Tyr134 together coordinate glycerol. His230 is modified (phosphohistidine; by HPr). Position 244 (Asp244) interacts with sn-glycerol 3-phosphate. Glycerol contacts are provided by Asp244 and Gln245. Thr266 and Gly309 together coordinate ADP. Residues Thr266, Gly309, Gln313, and Gly410 each contribute to the ATP site. 2 residues coordinate ADP: Gly410 and Asn414.

It belongs to the FGGY kinase family. Homotetramer and homodimer (in equilibrium). In terms of processing, the phosphoenolpyruvate-dependent sugar phosphotransferase system (PTS), including enzyme I, and histidine-containing protein (HPr) are required for the phosphorylation, which leads to the activation of the enzyme.

The catalysed reaction is glycerol + ATP = sn-glycerol 3-phosphate + ADP + H(+). The protein operates within polyol metabolism; glycerol degradation via glycerol kinase pathway; sn-glycerol 3-phosphate from glycerol: step 1/1. Its activity is regulated as follows. Activated by phosphorylation and inhibited by fructose 1,6-bisphosphate (FBP). In terms of biological role, key enzyme in the regulation of glycerol uptake and metabolism. Catalyzes the phosphorylation of glycerol to yield sn-glycerol 3-phosphate. The chain is Glycerol kinase from Bacillus cereus (strain Q1).